Here is a 367-residue protein sequence, read N- to C-terminus: Di-N-acetylchitobiase (367 aa).

The signal sequence occupies residues 1–23; the sequence is MALSDLLELTLLLLLPLLERLSA. Residues 24 to 367 form the GH18 domain; it reads EDCPCSEASL…EMWGALRPRL (344 aa). The active-site Proton donor is the Glu-128. N-linked (GlcNAc...) asparagine glycans are attached at residues Asn-178, Asn-213, Asn-247, and Asn-284.

It belongs to the glycosyl hydrolase 18 family.

It localises to the lysosome. Involved in the degradation of asparagine-linked glycoproteins. Hydrolyze of N-acetyl-beta-D-glucosamine (1-4)N-acetylglucosamine chitobiose core from the reducing end of the bond, it requires prior cleavage by glycosylasparaginase. The sequence is that of Di-N-acetylchitobiase (Ctbs) from Rattus norvegicus (Rat).